The sequence spans 568 residues: Cytosolic purine 5'-nucleotidase (568 aa).

D52 functions as the Nucleophile in the catalytic mechanism. Residues D52 and D54 each contribute to the IMP site. Positions 52 and 54 each coordinate Mg(2+). The active-site Proton donor is D54. Residues R144 and N154 each coordinate ATP. Positions 202, 206, 215, 249, 250, 251, and 292 each coordinate IMP. Residue D351 coordinates Mg(2+). The ATP site is built by Q453 and R456. The segment at 528 to 568 (ISEIKPPNLFPQKPQEITHCHDEDDDEEEEEEEEEEEEEEE) is disordered. Residues 548-568 (HDEDDDEEEEEEEEEEEEEEE) are required for tetramer assembly. The segment covering 550–568 (EDDDEEEEEEEEEEEEEEE) has biased composition (acidic residues).

This sequence belongs to the 5'(3')-deoxyribonucleotidase family. Homotetramer. Mg(2+) serves as cofactor.

The protein resides in the cytoplasm. It is found in the cytosol. The catalysed reaction is a ribonucleoside 5'-phosphate + H2O = a ribonucleoside + phosphate. The enzyme catalyses a 2'-deoxyribonucleoside + a ribonucleoside 5'-phosphate = a ribonucleoside + a 2'-deoxyribonucleoside 5'-phosphate. It carries out the reaction IMP + H2O = inosine + phosphate. It catalyses the reaction GMP + H2O = guanosine + phosphate. The catalysed reaction is dIMP + H2O = 2'-deoxyinosine + phosphate. The enzyme catalyses dGMP + H2O = 2'-deoxyguanosine + phosphate. It carries out the reaction XMP + H2O = xanthosine + phosphate. It catalyses the reaction inosine + GMP = guanosine + IMP. The catalysed reaction is dGMP + inosine = 2'-deoxyguanosine + IMP. The enzyme catalyses dIMP + inosine = 2'-deoxyinosine + IMP. It carries out the reaction inosine + UMP = uridine + IMP. It catalyses the reaction inosine + CMP = cytidine + IMP. The catalysed reaction is inosine + AMP = IMP + adenosine. Its activity is regulated as follows. Allosterically activated by various compounds including ATP, 2,3-BPG/2,3-Bisphosphoglyceric acid and Ap4A/P1,P4-bis(5'-adenosyl) tetraphosphate. Binding of an allosteric activator is a prerequisiste to magnesium and substrate binding. Inhibited by inorganic phosphate. Functionally, broad specificity cytosolic 5'-nucleotidase that catalyzes the dephosphorylation of 6-hydroxypurine nucleoside 5'-monophosphates. In addition, possesses a phosphotransferase activity by which it can transfer a phosphate from a donor nucleoside monophosphate to an acceptor nucleoside, preferably inosine, deoxyinosine and guanosine. Has the highest activities for IMP and GMP followed by dIMP, dGMP and XMP. Could also catalyze the transfer of phosphates from pyrimidine monophosphates but with lower efficiency. Through these activities regulates the purine nucleoside/nucleotide pools within the cell. The chain is Cytosolic purine 5'-nucleotidase (nt5c2) from Xenopus tropicalis (Western clawed frog).